The sequence spans 131 residues: Small ribosomal subunit protein uS8 (131 aa).

Belongs to the universal ribosomal protein uS8 family. As to quaternary structure, part of the 30S ribosomal subunit. Contacts proteins S5 and S12.

One of the primary rRNA binding proteins, it binds directly to 16S rRNA central domain where it helps coordinate assembly of the platform of the 30S subunit. This is Small ribosomal subunit protein uS8 from Verminephrobacter eiseniae (strain EF01-2).